Consider the following 102-residue polypeptide: NADH-quinone oxidoreductase subunit K (102 aa).

3 consecutive transmembrane segments (helical) span residues 6-26 (FEHA…ALLI), 30-50 (LIVM…AFIA), and 62-82 (VMFL…LGLG).

It belongs to the complex I subunit 4L family. As to quaternary structure, NDH-1 is composed of 14 different subunits. Subunits NuoA, H, J, K, L, M, N constitute the membrane sector of the complex.

It localises to the cell inner membrane. It carries out the reaction a quinone + NADH + 5 H(+)(in) = a quinol + NAD(+) + 4 H(+)(out). Its function is as follows. NDH-1 shuttles electrons from NADH, via FMN and iron-sulfur (Fe-S) centers, to quinones in the respiratory chain. The immediate electron acceptor for the enzyme in this species is believed to be ubiquinone. Couples the redox reaction to proton translocation (for every two electrons transferred, four hydrogen ions are translocated across the cytoplasmic membrane), and thus conserves the redox energy in a proton gradient. The chain is NADH-quinone oxidoreductase subunit K from Methylococcus capsulatus (strain ATCC 33009 / NCIMB 11132 / Bath).